A 92-amino-acid polypeptide reads, in one-letter code: Small ribosomal subunit protein uS19 (92 aa).

Belongs to the universal ribosomal protein uS19 family.

Its function is as follows. Protein S19 forms a complex with S13 that binds strongly to the 16S ribosomal RNA. The chain is Small ribosomal subunit protein uS19 from Thermobifida fusca (strain YX).